Consider the following 315-residue polypeptide: Ribosomal protein L11 methyltransferase (315 aa).

Residues Thr162, Gly183, Asp205, and Asn248 each contribute to the S-adenosyl-L-methionine site.

This sequence belongs to the methyltransferase superfamily. PrmA family.

It is found in the cytoplasm. It catalyses the reaction L-lysyl-[protein] + 3 S-adenosyl-L-methionine = N(6),N(6),N(6)-trimethyl-L-lysyl-[protein] + 3 S-adenosyl-L-homocysteine + 3 H(+). Functionally, methylates ribosomal protein L11. The protein is Ribosomal protein L11 methyltransferase of Enterococcus faecalis (strain ATCC 700802 / V583).